The following is a 461-amino-acid chain: Cysteine--tRNA ligase (461 aa).

Cysteine 28 contributes to the Zn(2+) binding site. Positions 30 to 40 (ITVYDLCHIGH) match the 'HIGH' region motif. Zn(2+) is bound by residues cysteine 209, histidine 234, and glutamate 238. The 'KMSKS' region motif lies at 266 to 270 (KMSKS). Lysine 269 contacts ATP.

Belongs to the class-I aminoacyl-tRNA synthetase family. As to quaternary structure, monomer. Requires Zn(2+) as cofactor.

The protein localises to the cytoplasm. It catalyses the reaction tRNA(Cys) + L-cysteine + ATP = L-cysteinyl-tRNA(Cys) + AMP + diphosphate. In Salmonella arizonae (strain ATCC BAA-731 / CDC346-86 / RSK2980), this protein is Cysteine--tRNA ligase.